The following is a 626-amino-acid chain: Chaperone protein HtpG (626 aa).

The a; substrate-binding stretch occupies residues 1-339 (MSTNQETRGF…SNDLPLNVSR (339 aa)). The tract at residues 340-555 (EILQDNKVTA…NDQMTTQMAK (216 aa)) is b. A c region spans residues 556 to 626 (LFAAAGQPVP…FIKRINKLLG (71 aa)).

It belongs to the heat shock protein 90 family. As to quaternary structure, homodimer.

Its subcellular location is the cytoplasm. Functionally, molecular chaperone. Has ATPase activity. This chain is Chaperone protein HtpG, found in Aggregatibacter actinomycetemcomitans (Actinobacillus actinomycetemcomitans).